Reading from the N-terminus, the 302-residue chain is Sulfate adenylyltransferase subunit 2 (302 aa).

The protein belongs to the PAPS reductase family. CysD subfamily. In terms of assembly, heterodimer composed of CysD, the smaller subunit, and CysN.

The enzyme catalyses sulfate + ATP + H(+) = adenosine 5'-phosphosulfate + diphosphate. The protein operates within sulfur metabolism; hydrogen sulfide biosynthesis; sulfite from sulfate: step 1/3. Its function is as follows. With CysN forms the ATP sulfurylase (ATPS) that catalyzes the adenylation of sulfate producing adenosine 5'-phosphosulfate (APS) and diphosphate, the first enzymatic step in sulfur assimilation pathway. APS synthesis involves the formation of a high-energy phosphoric-sulfuric acid anhydride bond driven by GTP hydrolysis by CysN coupled to ATP hydrolysis by CysD. This chain is Sulfate adenylyltransferase subunit 2, found in Xanthomonas campestris pv. campestris (strain 8004).